Consider the following 99-residue polypeptide: A-type ATP synthase subunit F (99 aa).

Belongs to the V-ATPase F subunit family. As to quaternary structure, has multiple subunits with at least A(3), B(3), C, D, E, F, H, I and proteolipid K(x).

It is found in the cell membrane. Component of the A-type ATP synthase that produces ATP from ADP in the presence of a proton gradient across the membrane. This Methanococcus vannielii (strain ATCC 35089 / DSM 1224 / JCM 13029 / OCM 148 / SB) protein is A-type ATP synthase subunit F.